The primary structure comprises 195 residues: dTTP/UTP pyrophosphatase (195 aa).

Residue Asp-70 is the Proton acceptor of the active site.

The protein belongs to the Maf family. YhdE subfamily. A divalent metal cation is required as a cofactor.

Its subcellular location is the cytoplasm. It carries out the reaction dTTP + H2O = dTMP + diphosphate + H(+). It catalyses the reaction UTP + H2O = UMP + diphosphate + H(+). Functionally, nucleoside triphosphate pyrophosphatase that hydrolyzes dTTP and UTP. May have a dual role in cell division arrest and in preventing the incorporation of modified nucleotides into cellular nucleic acids. The polypeptide is dTTP/UTP pyrophosphatase (Photorhabdus laumondii subsp. laumondii (strain DSM 15139 / CIP 105565 / TT01) (Photorhabdus luminescens subsp. laumondii)).